We begin with the raw amino-acid sequence, 205 residues long: Small ribosomal subunit protein uS4 (205 aa).

The segment at 19-45 is disordered; that stretch reads IWGRPKSPVNRREYGPGQHGQRRKGKL. Residues 94 to 157 form the S4 RNA-binding domain; the sequence is SRLDAVVYRA…KQLAIVLEAV (64 aa).

The protein belongs to the universal ribosomal protein uS4 family. Part of the 30S ribosomal subunit. Contacts protein S5. The interaction surface between S4 and S5 is involved in control of translational fidelity.

In terms of biological role, one of the primary rRNA binding proteins, it binds directly to 16S rRNA where it nucleates assembly of the body of the 30S subunit. With S5 and S12 plays an important role in translational accuracy. In Brucella melitensis biotype 2 (strain ATCC 23457), this protein is Small ribosomal subunit protein uS4.